Here is a 971-residue protein sequence, read N- to C-terminus: MEGSTGFDGDATTFFAPDAVFGDRVRRFQEFLDTFTSYRDSVRSIQVYNSNNAANYNDDQDDADERDLLGDDDGDDLEKEKKAASSTSLNILPHRIIISLDDLREFDRSFWSGILVEPAYFIPPAEKALTDLADSMDDVPHPNASAVSSRHPWKLSFKGSFGAHALSPRTLTAQHLNKLVSVEGIVTKTSLVRPKLIRSVHYAAKTGRFHYRDYTDATTTLTTRIPTPAIYPTEDTEGNKLTTEYGYSTFIDHQRITVQEMPEMAPAGQLPRSIDVILDDDLVDKTKPGDRVNVVGVFKSLGAGGMNQSNSNTLIGFKTLILGNTVYPLHARSTGVAARQMLTDFDIRNINKLSKKKDIFDILSQSLAPSIYGHDHIKKAILLMLMGGVEKNLENGSHLRGDINILMVGDPSTAKSQLLRFVLNTASLAIATTGRGSSGVGLTAAVTTDRETGERRLEAGAMVLADRGVVCIDEFDKMTDVDRVAIHEVMEQQTVTIAKAGIHTTLNARCSVIAAANPVFGQYDVNRDPHQNIALPDSLLSRFDLLFVVTDDINEIRDRSISEHVLRTHRYLPPGYLEGEPVRERLNLSLAVGEDADINPEEHSNSGAGVENEGEDDEDHVFEKFNPLLQAGAKLAKNKGNYNGTEIPKLVTIPFLRKYVQYAKERVIPQLTQEAINVIVKNYTDLRNDDNTKKSPITARTLETLIRLATAHAKVRLSKTVNKVDAKVAANLLRFALLGEDIGNDIDEEESEYEEALSKRSPQKSPKKRQRVRQPASNSGSPIKSTPRRSTASSVNATPSSARRILRFQDDEQNAGEDDNDIMSPLPADEEAELQRRLQLGLRVSPRRREHLHAPEEGSSGPLTEVGTPRLPNVSSAGQDDEQQQSVISFDNVEPGTISTGRLSLISGIIARLMQTEIFEEESYPVASLFERINEELPEEEKFSAQEYLAGLKIMSDRNNLMVADDKVWRV.

Residues 52–78 form a disordered region; that stretch reads NAANYNDDQDDADERDLLGDDDGDDLE. Residues 58–77 show a composition bias toward acidic residues; it reads DDQDDADERDLLGDDDGDDL. Residues 359–566 form the MCM domain; the sequence is IFDILSQSLA…RDRSISEHVL (208 aa). 409 to 416 contacts ATP; the sequence is GDPSTAKS. The Arginine finger signature appears at 541-544; that stretch reads SRFD. Disordered stretches follow at residues 594–614, 749–825, and 842–893; these read EDAD…ENEG, EESE…IMSP, and LRVS…FDNV. Residues serine 761, serine 777, and serine 781 each carry the phosphoserine modification. A compositionally biased stretch (basic residues) spans 761–772; the sequence is SPQKSPKKRQRV. Polar residues predominate over residues 775–801; the sequence is PASNSGSPIKSTPRRSTASSVNATPSS. Acidic residues predominate over residues 811 to 821; that stretch reads DEQNAGEDDND. Residue threonine 868 is modified to Phosphothreonine. The segment covering 873-889 has biased composition (polar residues); it reads NVSSAGQDDEQQQSVIS.

The protein belongs to the MCM family. In terms of assembly, component of the MCM2-7 complex. The complex forms a toroidal hexameric ring with the proposed subunit order MCM2-MCM6-MCM4-MCM7-MCM3-MCM5; loaded onto DNA, forms a head-head double hexamer. Interacts with CSM1.

The protein localises to the nucleus. The catalysed reaction is ATP + H2O = ADP + phosphate + H(+). In terms of biological role, acts as a component of the MCM2-7 complex (MCM complex) which is the putative replicative helicase essential for 'once per cell cycle' DNA replication initiation and elongation in eukaryotic cells. The active ATPase sites in the MCM2-7 ring are formed through the interaction surfaces of two neighboring subunits such that a critical structure of a conserved arginine finger motif is provided in trans relative to the ATP-binding site of the Walker A box of the adjacent subunit. The six ATPase active sites, however, are likely to contribute differentially to the complex helicase activity. Once loaded onto DNA, double hexamers can slide on dsDNA in the absence of ATPase activity. Necessary for cell growth. The protein is DNA replication licensing factor MCM3 (MCM3) of Saccharomyces cerevisiae (strain ATCC 204508 / S288c) (Baker's yeast).